Here is a 1440-residue protein sequence, read N- to C-terminus: MEDSHELDLTYVTERIIAVSFPASCSEESYLHSLQEVTRMLKCKHGDNYLVLNLSEKRYDLTKLNPKIMDVGWPELHAPPLDKMCTICKAQESWLNNDPQHVVVIHCRGGKGRIGVVISSYMHFTNVSASADQALDRFAMKKFYDDKISALMEPSQKRYVQFLSGLLSGAMKMNTSPLFLHFVIMHGVPSFDTGGACRPFLKLYQAMQPVYTSGIYNVGSENPSRIRIAIEPAQLLKGDIMVKCYHKKFRSATRDVIFRLQFHTGAVQGYGLLFGKEELDSACKDDRFPDYGKIELVFSATPEKIQGSEHLYSDQGVTVDYNTADPLIRWDSYENMSADGEVLHTQGPVDGSLYAKVRKKSASDTGIPSSPQGMPATSSPDHGDHTLSVSSDSGHSTASARTDKTEERLTPGARRGLSPQEKAELDQLLSGFGLEDSASSHKDMTDMRSKYSGTRHVVPAQVHVNGDAALKDRETDILDDEMPHHDLHSVDSLGTLSSSEGPQSTHLGPFTCLKSSQNSLLSDGFGNGVAEDHNGVLSPDLGLGVDTLYDRERMCGGREQKPLQPLLRKPSAPTPVQAYGQSNYSTQTWVRQQQMVAAHQYSFASDGEARLGSRSTVDNTGLAQPPPHIPVTPNRGASSRVAVQRGISNGPNPPDTQQLCPGKALQPRFQDDRVTNGVHQEPNTGSSPGSPTLDIDQSIEQLNRLILELDPTFEPIPTHLNALGISAVCPDGVGSGLRCSGRLDSVDGPGRSPGRQGDDPIGGRLRKLSIGQYDNDAASQVTFSKCGWGKAGVDPAPSLGSFSSPEDIKETVITAYPSDLNMIDGRIPNSKESSMCLTPSFPVSPETPYVKTSPRYPPFSPPEPQLSSPASLHKGREPRGCPEIISHTVGMSESPVGPKPTMLRADMPATPNFQQVFASSCTVSSNGPGQRRESPPSAERQWVESSPKSTLTLLGNSHPSESPLGTHEFCSSGKDSPGLPCFQSSELQASFHSHELSMSEPQGALPPAGSQTFLGFNTVTTATSVLPPGEDAGTLLVNSHGTSPAPGTPLLTTGAADNGFLPHNFLTVSPGASSHHSPGLQNQNVSLPGQPPLPEKKRASEGDRSLGSVSPSSSGFSSPHSGSTMSIPFPNVLPDFCKPSEVASPLPDSPNDKLVIVKFVQDTSKFWYKADISREQAIAMLKDKAPGSFIVRDSHSFRGAYGLAMKVATPPPSVLHLNKKAGDLSNELVRHFLIECTPKGVRLKGCSNEPYFGSLTALVCQHSITPLALPCKLLIPERDPLEEIAENSPQTAANSAAELLKQGAACNVWYLNSVEMESLTGHQAVQKALSMTLVQEPPPVSTVVHFKVSAQGITLTDNQRKLFFRRHYPVSSVIFCALDPQDRKWIKDGPSSKVFGFVARKQGSATDNVCHLFAEHDPEQPASAIVNFVSKVMIGSPKKI.

Residues 1 to 170 enclose the Phosphatase tensin-type domain; sequence MEDSHELDLT…QFLSGLLSGA (170 aa). In terms of domain architecture, C2 tensin-type spans 175 to 301; sequence TSPLFLHFVI…GKIELVFSAT (127 aa). Thr-323 is modified (phosphothreonine). Phosphoserine occurs at positions 332, 361, and 370. Residues 358 to 421 form a disordered region; the sequence is RKKSASDTGI…GARRGLSPQE (64 aa). Polar residues-rich tracts occupy residues 363 to 380 and 387 to 400; these read SDTG…TSSP and LSVS…TASA. Phosphoserine is present on residues Ser-440, Ser-516, and Ser-571. 3 disordered regions span residues 607–662, 675–694, and 740–762; these read GEAR…LCPG, TNGV…PTLD, and SGRL…DPIG. Polar residues predominate over residues 613–622; that stretch reads SRSTVDNTGL. Phosphothreonine is present on Thr-632. Polar residues-rich tracts occupy residues 646–659 and 677–690; these read GISN…TQQL and GVHQ…SPGS. Phosphoserine is present on residues Ser-648, Ser-687, and Ser-690. Phosphoserine is present on Ser-769. Position 773 is a phosphotyrosine (Tyr-773). Residues Ser-804, Ser-860, Ser-894, and Ser-960 each carry the phosphoserine modification. Disordered stretches follow at residues 846 to 881, 887 to 906, 920 to 975, and 1067 to 1123; these read ETPY…PRGC, HTVG…LRAD, SCTV…SGKD, and TVSP…HSGS. Positions 855–864 are enriched in pro residues; the sequence is RYPPFSPPEP. 2 stretches are compositionally biased toward polar residues: residues 943 to 960 and 1067 to 1087; these read VESS…SHPS and TVSP…NVSL. Over residues 1094 to 1104 the composition is skewed to basic and acidic residues; sequence PEKKRASEGDR. Residues 1105–1123 show a composition bias toward low complexity; sequence SLGSVSPSSSGFSSPHSGS. 2 positions are modified to phosphoserine: Ser-1144 and Ser-1149. Residues 1167–1277 enclose the SH2 domain; that stretch reads WYKADISREQ…ALPCKLLIPE (111 aa). A phosphoserine mark is found at Ser-1288 and Ser-1436. The region spanning 1305–1439 is the PTB domain; the sequence is ACNVWYLNSV…SKVMIGSPKK (135 aa).

The protein belongs to the PTEN phosphatase protein family. As to quaternary structure, interacts with EGFR; EGF promotes the interaction with EGFR. Interacts with PTK2/FAK1 and BCAR1. Tyrosine phosphorylation is critical for these interactions. Interacts with Rho GTPase-activating protein DLC1 and with the regulatory p85 subunit of the PI3K kinase complex; in resting cells, interacts (via C2 tensin-type domain) with DLC1 but, following growth factor stimulation, TNS3 is phosphorylated which leads to weakened interaction with DLC1 and enhanced interaction (via C2 tensin-type domain) with p85 while DLC1 interaction with PTEN increases. Interacts (when phosphorylated on the SH2 domain) with integrins ITGB1, ITGB3 and ITGB5 and with scaffolding protein PEAK1 (phosphorylated on 'Tyr-632'); these interactions mediate the association of PEAK1 with ITGB1, ITGB3 and ITGB5. Interacts (via N-terminus) with DOCK5 (via N-terminus); the interaction increases DOCK5 guanine nucleotide exchange activity towards Rac. Interacts with receptor tyrosine kinase MET. Phosphorylated on Ser/Thr and Tyr residues. Phosphorylated on Thr-323 in the C2-type tensin domain following EGF stimulation which changes its binding preference from DLC1 to the p85 regulatory subunit of the PI3K kinase complex. EGF induces tyrosine phosphorylation in a time- and dose-dependent manner. Phosphorylation of the SH2 domain enhances interaction with PEAK1. As to expression, expressed in brain, heart, lung, liver, spleen, kidney, stomach, small intestine, skeletal muscle, skin, thymus, testis, uterus, placenta, aorta and trachea.

It localises to the cell junction. The protein resides in the focal adhesion. Its subcellular location is the cell projection. The protein localises to the podosome. Its function is as follows. May act as a protein phosphatase and/or a lipid phosphatase. Involved in the dissociation of the integrin-tensin-actin complex. EGF activates TNS4 and down-regulates TNS3 which results in capping the tail of ITGB1. Increases DOCK5 guanine nucleotide exchange activity towards Rac and plays a role in osteoclast podosome organization. Enhances RHOA activation in the presence of DLC1. Required for growth factor-induced epithelial cell migration; growth factor stimulation induces TNS3 phosphorylation which changes its binding preference from DLC1 to the p85 regulatory subunit of the PI3K kinase complex, displacing PI3K inhibitor PTEN and resulting in translocation of the TNS3-p85 complex to the leading edge of migrating cells to promote RAC1 activation. Meanwhile, PTEN switches binding preference from p85 to DLC1 and the PTEN-DLC1 complex translocates to the posterior of migrating cells to activate RHOA. Acts as an adapter protein by bridging the association of scaffolding protein PEAK1 with integrins ITGB1, ITGB3 and ITGB5 which contributes to the promotion of cell migration. Controls tonsil-derived mesenchymal stem cell proliferation and differentiation by regulating the activity of integrin ITGB1. This chain is Tensin-3 (Tns3), found in Mus musculus (Mouse).